The sequence spans 101 residues: Small ubiquitin-related modifier 1 (101 aa).

S2 bears the N-acetylserine mark. S2 bears the Phosphoserine mark. A Glycyl lysine isopeptide (Lys-Gly) (interchain with G-Cter in SUMO1); alternate cross-link involves residue K7. Residue K7 forms a Glycyl lysine isopeptide (Lys-Gly) (interchain with G-Cter in SUMO2); alternate linkage. S9 is subject to Phosphoserine. Glycyl lysine isopeptide (Lys-Gly) (interchain with G-Cter in SUMO2) cross-links involve residues K16, K17, and K23. In terms of domain architecture, Ubiquitin-like spans 20–97 (EYIKLKVIGQ…IEVYQEQTGG (78 aa)). Residue K25 forms a Glycyl lysine isopeptide (Lys-Gly) (interchain with G-Cter in SUMO1) linkage. S32 bears the Phosphoserine mark. Glycyl lysine isopeptide (Lys-Gly) (interchain with G-Cter in SUMO2) cross-links involve residues K37, K39, K45, and K46. A Glycyl lysine isopeptide (Gly-Lys) (interchain with K-? in acceptor proteins) cross-link involves residue G97. Residues 98–101 (HSNV) constitute a propeptide that is removed on maturation.

Belongs to the ubiquitin family. SUMO subfamily. In terms of assembly, covalently attached to KCNB1; UBE2I increases cross-linking with KCNB1 and PIAS1 decreases cross-links with KCNB1. Interacts with SAE2, RANBP2, PIAS1 and PIAS2. Interacts with PRKN. Covalently attached to a number of proteins such as IKFZ1, PML, RANGAP1, HIPK2, SP100, p53, p73-alpha, MDM2, JUN, DNMT3B and TDG. Also interacts with HIF1A, HIPK2, HIPK3, CHD3, EXOSC9, RAD51 and RAD52. Interacts with USP25 (via ts SIM domain); the interaction weakly sumoylates USP25. Interacts with SIMC1, CASP8AP2, RNF111 and SOBP (via SIM domains). Interacts with BHLHE40/DEC1. Interacts with RWDD3. Interacts with UBE2I/UBC9 and this interaction is enhanced in the presence of RWDD3. Interacts with MTA1. Interacts with SENP2. Interacts with HINT1. Post-translationally, cleavage of precursor form by SENP1 or SENP2 is necessary for function. In terms of processing, polymeric SUMO1 chains undergo polyubiquitination by RNF4.

Its subcellular location is the nucleus membrane. The protein resides in the nucleus speckle. The protein localises to the cytoplasm. It localises to the nucleus. It is found in the PML body. Its subcellular location is the cell membrane. Its function is as follows. Ubiquitin-like protein that can be covalently attached to proteins as a monomer or a lysine-linked polymer. Covalent attachment via an isopeptide bond to its substrates requires prior activation by the E1 complex SAE1-SAE2 and linkage to the E2 enzyme UBE2I, and can be promoted by E3 ligases such as PIAS1-4, RANBP2 or CBX4. This post-translational modification on lysine residues of proteins plays a crucial role in a number of cellular processes such as nuclear transport, DNA replication and repair, mitosis and signal transduction. Involved for instance in targeting RANGAP1 to the nuclear pore complex protein RANBP2. Covalently attached to the voltage-gated potassium channel KCNB1; this modulates the gating characteristics of KCNB1. Polymeric SUMO1 chains are also susceptible to polyubiquitination which functions as a signal for proteasomal degradation of modified proteins. May be involved in modified proteins. May also regulate a network of genes involved in palate development. Covalently attached to ZFHX3. This Ictidomys tridecemlineatus (Thirteen-lined ground squirrel) protein is Small ubiquitin-related modifier 1 (SUMO1).